A 109-amino-acid polypeptide reads, in one-letter code: Large ribosomal subunit protein uL22 (109 aa).

This sequence belongs to the universal ribosomal protein uL22 family. As to quaternary structure, part of the 50S ribosomal subunit.

This protein binds specifically to 23S rRNA; its binding is stimulated by other ribosomal proteins, e.g. L4, L17, and L20. It is important during the early stages of 50S assembly. It makes multiple contacts with different domains of the 23S rRNA in the assembled 50S subunit and ribosome. Functionally, the globular domain of the protein is located near the polypeptide exit tunnel on the outside of the subunit, while an extended beta-hairpin is found that lines the wall of the exit tunnel in the center of the 70S ribosome. In Polaromonas naphthalenivorans (strain CJ2), this protein is Large ribosomal subunit protein uL22.